A 524-amino-acid polypeptide reads, in one-letter code: Probable pectinesterase/pectinesterase inhibitor 19 (524 aa).

Positions 1-22 are cleaved as a signal peptide; sequence MLVKVFSFFILMITMVVIGVSK. The tract at residues 23 to 172 is pectinesterase inhibitor 19; it reads EYCDDKQSCQ…ISRARIALAL (150 aa). Positions 215 to 510 are pectinesterase 19; sequence DVVVAKDGTG…FTVAKLLDGE (296 aa). 2 N-linked (GlcNAc...) asparagine glycosylation sites follow: Asn265 and Asn281. Thr290 is a binding site for substrate. Residue Asp343 is the Proton donor; for pectinesterase activity of the active site. Cysteines 357 and 377 form a disulfide. Asp364 functions as the Nucleophile; for pectinesterase activity in the catalytic mechanism. N-linked (GlcNAc...) asparagine glycosylation is present at Asn412. Substrate-binding residues include Arg430 and Trp432.

In the N-terminal section; belongs to the PMEI family. It in the C-terminal section; belongs to the pectinesterase family. Expressed in siliques, but not in flower buds.

The protein resides in the secreted. Its subcellular location is the cell wall. It carries out the reaction [(1-&gt;4)-alpha-D-galacturonosyl methyl ester](n) + n H2O = [(1-&gt;4)-alpha-D-galacturonosyl](n) + n methanol + n H(+). Its pathway is glycan metabolism; pectin degradation; 2-dehydro-3-deoxy-D-gluconate from pectin: step 1/5. Functionally, acts in the modification of cell walls via demethylesterification of cell wall pectin. This chain is Probable pectinesterase/pectinesterase inhibitor 19 (PME19), found in Arabidopsis thaliana (Mouse-ear cress).